The chain runs to 779 residues: Protein WEAK CHLOROPLAST MOVEMENT UNDER BLUE LIGHT-like 1 (779 aa).

The segment at 1–119 is disordered; that stretch reads MEDLKTTDAL…NAVSPRPLYS (119 aa). Residues 79-88 are compositionally biased toward polar residues; sequence DSPTTPSFVS. Phosphoserine is present on serine 139. Coiled coils occupy residues 182 to 503, 532 to 587, and 657 to 715; these read RMKV…KQRE, KETR…ESRL, and AVSE…KWRE. The segment covering 650–661 has biased composition (low complexity); that stretch reads ANARVAAAVSEV. Disordered stretches follow at residues 650–674 and 694–759; these read ANARVAAAVSEVGEAKETEKRSLEK and EKAE…NPVK. Composition is skewed to basic and acidic residues over residues 662 to 674 and 694 to 718; these read GEAKETEKRSLEK and EKAEKAKEGKLGVEQELRKWREVSE. Polar residues predominate over residues 741–753; that stretch reads TSVSNETETNPIP.

The protein belongs to the WEB family.

In Arabidopsis thaliana (Mouse-ear cress), this protein is Protein WEAK CHLOROPLAST MOVEMENT UNDER BLUE LIGHT-like 1 (WEL1).